We begin with the raw amino-acid sequence, 279 residues long: Proto-oncogene FRAT1 (279 aa).

2 disordered regions span residues 1–24 (MPCR…EEDS) and 56–76 (AQHS…APGP). Residues 7-24 (EEEEAGEEAEGEEEEEDS) show a composition bias toward acidic residues. S88 bears the Phosphoserine mark. Disordered regions lie at residues 136–200 (GPSA…DDPH) and 228–279 (RAKL…VPGS). Positions 198-220 (DPHRLLQQLVLSGNLIKEAVRRL) are involved in GSK-3 binding. Phosphoserine is present on residues S249 and S252.

Belongs to the GSK-3-binding protein family. Binds DVL1. Binds GSK-3 and prevent GSK-3-dependent phosphorylation. Post-translationally, phosphorylated.

Its subcellular location is the cytoplasm. In terms of biological role, positively regulates the Wnt signaling pathway by stabilizing beta-catenin through the association with GSK-3. May play a role in tumor progression and collaborate with PIM1 and MYC in lymphomagenesis. This chain is Proto-oncogene FRAT1 (FRAT1), found in Homo sapiens (Human).